The chain runs to 97 residues: Integration host factor subunit alpha (97 aa).

It belongs to the bacterial histone-like protein family. As to quaternary structure, heterodimer of an alpha and a beta chain.

Functionally, this protein is one of the two subunits of integration host factor, a specific DNA-binding protein that functions in genetic recombination as well as in transcriptional and translational control. The sequence is that of Integration host factor subunit alpha from Acinetobacter baylyi (strain ATCC 33305 / BD413 / ADP1).